The chain runs to 341 residues: Fructose-1,6-bisphosphatase, cytosolic (341 aa).

Glutamate 71, glutamate 100, aspartate 121, leucine 123, and aspartate 124 together coordinate Mg(2+). Residues 124–127, asparagine 215, tyrosine 247, tyrosine 267, and lysine 277 contribute to the substrate site; that span reads DGSF. Glutamate 283 is a Mg(2+) binding site.

It belongs to the FBPase class 1 family. Mg(2+) serves as cofactor.

Its subcellular location is the cytoplasm. It carries out the reaction beta-D-fructose 1,6-bisphosphate + H2O = beta-D-fructose 6-phosphate + phosphate. The sequence is that of Fructose-1,6-bisphosphatase, cytosolic from Pisum sativum (Garden pea).